We begin with the raw amino-acid sequence, 127 residues long: Protein ApaG (127 aa).

The ApaG domain maps to 3 to 127 (ESEKYRIEVE…FMLAMPRVLH (125 aa)).

This is Protein ApaG from Aromatoleum aromaticum (strain DSM 19018 / LMG 30748 / EbN1) (Azoarcus sp. (strain EbN1)).